A 716-amino-acid chain; its full sequence is RNA-directed RNA polymerase catalytic subunit (716 aa).

One can recognise a RdRp catalytic domain in the interval 286–465 (SSKLEAVSEV…GINMSPSKCI (180 aa)).

Belongs to the influenza viruses polymerase PB1 family. In terms of assembly, RNA polymerase is composed of three subunits: PA, PB1 and PB2.

The enzyme catalyses RNA(n) + a ribonucleoside 5'-triphosphate = RNA(n+1) + diphosphate. The polypeptide is RNA-directed RNA polymerase catalytic subunit (P2) (Dhori virus (strain Indian/1313/61) (Dho)).